The following is a 264-amino-acid chain: MSKVTSSTLLKYKQEGRKFTALTAYDASFASAFDGEGIDVLLVGDSLGMVLQGHDDTLPVTTADIAYHTRCVRRGIERSLLIADMPFMSYATPEQAMENATALMQAGANMVKLEGGHWLLETVTKLTERGIPVCAHLGLTPQSVHVFGGFKVQGRDAENAQRILDEAKALEAAGAQLLVVECIPESLATAITQALTIPVIGIGAGATTDGQILVMHDVLGISSGYIPRFSKNYLKQTGEIRSAVRAYIEEVANGTFPSSEHTFS.

Positions 45 and 84 each coordinate Mg(2+). Residues 45 to 46, D84, and K112 each bind 3-methyl-2-oxobutanoate; that span reads DS. Residue E114 coordinates Mg(2+). The active-site Proton acceptor is the E181.

The protein belongs to the PanB family. Homodecamer; pentamer of dimers. The cofactor is Mg(2+).

It localises to the cytoplasm. The enzyme catalyses 3-methyl-2-oxobutanoate + (6R)-5,10-methylene-5,6,7,8-tetrahydrofolate + H2O = 2-dehydropantoate + (6S)-5,6,7,8-tetrahydrofolate. The protein operates within cofactor biosynthesis; (R)-pantothenate biosynthesis; (R)-pantoate from 3-methyl-2-oxobutanoate: step 1/2. In terms of biological role, catalyzes the reversible reaction in which hydroxymethyl group from 5,10-methylenetetrahydrofolate is transferred onto alpha-ketoisovalerate to form ketopantoate. This is 3-methyl-2-oxobutanoate hydroxymethyltransferase from Shewanella sp. (strain MR-4).